The chain runs to 398 residues: Phosphoglycerate kinase (398 aa).

Residues 23–25 (DFN), Arg38, 61–64 (HMGK), Arg122, and Arg155 contribute to the substrate site. Residues Lys206, Gly297, Glu328, and 354 to 357 (GGDS) contribute to the ATP site.

This sequence belongs to the phosphoglycerate kinase family. As to quaternary structure, monomer.

It is found in the cytoplasm. It catalyses the reaction (2R)-3-phosphoglycerate + ATP = (2R)-3-phospho-glyceroyl phosphate + ADP. It participates in carbohydrate degradation; glycolysis; pyruvate from D-glyceraldehyde 3-phosphate: step 2/5. In Clostridium botulinum (strain 657 / Type Ba4), this protein is Phosphoglycerate kinase.